Here is a 298-residue protein sequence, read N- to C-terminus: Beta-soluble NSF attachment protein (298 aa).

This sequence belongs to the SNAP family. As to quaternary structure, interacts with PRKCABP, and disrupts the interaction between GRIA2 and PRKCABP, leading to the internalization of GRIA2. As to expression, brain.

It is found in the membrane. Required for vesicular transport between the endoplasmic reticulum and the Golgi apparatus. This Bos taurus (Bovine) protein is Beta-soluble NSF attachment protein (NAPB).